The chain runs to 378 residues: ATP phosphoribosyltransferase regulatory subunit (378 aa).

This sequence belongs to the class-II aminoacyl-tRNA synthetase family. HisZ subfamily. Heteromultimer composed of HisG and HisZ subunits.

It localises to the cytoplasm. It functions in the pathway amino-acid biosynthesis; L-histidine biosynthesis; L-histidine from 5-phospho-alpha-D-ribose 1-diphosphate: step 1/9. Functionally, required for the first step of histidine biosynthesis. May allow the feedback regulation of ATP phosphoribosyltransferase activity by histidine. The polypeptide is ATP phosphoribosyltransferase regulatory subunit (Brucella abortus (strain 2308)).